Here is a 363-residue protein sequence, read N- to C-terminus: 3-dehydroquinate synthase (363 aa).

NAD(+) is bound by residues 109-113 (GATTD), 133-134 (TT), K146, and K155. The Zn(2+) site is built by E188, H251, and H267.

This sequence belongs to the sugar phosphate cyclases superfamily. Dehydroquinate synthase family. Requires NAD(+) as cofactor. Co(2+) serves as cofactor. Zn(2+) is required as a cofactor.

The protein resides in the cytoplasm. The catalysed reaction is 7-phospho-2-dehydro-3-deoxy-D-arabino-heptonate = 3-dehydroquinate + phosphate. It functions in the pathway metabolic intermediate biosynthesis; chorismate biosynthesis; chorismate from D-erythrose 4-phosphate and phosphoenolpyruvate: step 2/7. Its function is as follows. Catalyzes the conversion of 3-deoxy-D-arabino-heptulosonate 7-phosphate (DAHP) to dehydroquinate (DHQ). This chain is 3-dehydroquinate synthase, found in Streptomyces avermitilis (strain ATCC 31267 / DSM 46492 / JCM 5070 / NBRC 14893 / NCIMB 12804 / NRRL 8165 / MA-4680).